The chain runs to 319 residues: Malate dehydrogenase (319 aa).

Residues 10-15 (GAGNIG) and D34 contribute to the NAD(+) site. Residues R83 and R89 each coordinate substrate. NAD(+)-binding positions include N96 and 119–121 (ITN). Substrate contacts are provided by N121 and R152. H176 serves as the catalytic Proton acceptor.

Belongs to the LDH/MDH superfamily. MDH type 3 family.

The enzyme catalyses (S)-malate + NAD(+) = oxaloacetate + NADH + H(+). Catalyzes the reversible oxidation of malate to oxaloacetate. The chain is Malate dehydrogenase from Francisella tularensis subsp. tularensis (strain FSC 198).